We begin with the raw amino-acid sequence, 456 residues long: NADPH-ferredoxin reductase FprA (456 aa).

The FAD site is built by serine 14, glutamate 40, leucine 48, and valine 84. Residues arginine 110, asparagine 155–valine 158, arginine 199–arginine 200, and glutamate 211 contribute to the NADP(+) site. Residues tryptophan 359 and glycine 366–isoleucine 368 each bind FAD. Glycine 366 serves as a coordination point for NADP(+).

It belongs to the ferredoxin--NADP reductase type 1 family. In terms of assembly, monomer. FAD is required as a cofactor.

It catalyses the reaction 2 reduced [2Fe-2S]-[ferredoxin] + NADP(+) + H(+) = 2 oxidized [2Fe-2S]-[ferredoxin] + NADPH. In terms of biological role, may serve as electron transfer protein and supply electrons to P450 systems. This chain is NADPH-ferredoxin reductase FprA (fprA), found in Mycobacterium tuberculosis (strain CDC 1551 / Oshkosh).